The sequence spans 326 residues: Putative ABC transporter ATP-binding protein MA_4020 (326 aa).

The segment covering M1 to N12 has biased composition (polar residues). The disordered stretch occupies residues M1–A34. Residues L46 to R281 enclose the ABC transporter domain. Residue G80–S87 coordinates ATP.

It belongs to the ABC transporter superfamily.

The protein localises to the cell membrane. Probably part of an ABC transporter complex. Responsible for energy coupling to the transport system. The sequence is that of Putative ABC transporter ATP-binding protein MA_4020 from Methanosarcina acetivorans (strain ATCC 35395 / DSM 2834 / JCM 12185 / C2A).